The following is a 173-amino-acid chain: Lactoylglutathione lyase (173 aa).

The VOC domain occupies 24–170 (VFNHTMLRVK…DGYWVEVIQP (147 aa)). A Ni(2+)-binding site is contributed by His27. Arg31 serves as a coordination point for substrate. Glu93 contacts Ni(2+). Residues Asn97, Arg116, and His120 each contribute to the substrate site. Ni(2+) is bound by residues His120 and Glu166. Catalysis depends on Glu166, which acts as the Proton donor/acceptor.

Belongs to the glyoxalase I family. Monomer. Ni(2+) is required as a cofactor. It depends on Zn(2+) as a cofactor.

The enzyme catalyses (R)-S-lactoylglutathione = methylglyoxal + glutathione. It participates in secondary metabolite metabolism; methylglyoxal degradation; (R)-lactate from methylglyoxal: step 1/2. In terms of biological role, catalyzes the conversion of hemimercaptal, formed from methylglyoxal and glutathione, to S-lactoylglutathione. This chain is Lactoylglutathione lyase (gloA), found in Pseudomonas putida (Arthrobacter siderocapsulatus).